Here is a 297-residue protein sequence, read N- to C-terminus: MGAQIRVYRQKISSTTSMRKIFKAMELIATSRIGKARARVAASLPYANAITRAVSAVASQSEIDHPLVTEPEQIRRAAVLVITSDRGLAGSYSASVLKQAEGLTELLREEGKEVKTYVVGRKAQAYFDFRNRPYAQVWTGNTDSPVFATAQEIGAALLEDFATAYEEGGVDEIHVVYTRFKSMVTQEPTVIRLLPLEVVEEQAASESDLLPLYEFEPETEQVLDALLPRYIESRIFAAMLQAAASELAARQRAMKSAGDNATDLIKKYTRLRNTARQAEITQELSEIVAGADALNAS.

Belongs to the ATPase gamma chain family. As to quaternary structure, F-type ATPases have 2 components, CF(1) - the catalytic core - and CF(0) - the membrane proton channel. CF(1) has five subunits: alpha(3), beta(3), gamma(1), delta(1), epsilon(1). CF(0) has three main subunits: a, b and c.

The protein localises to the cell membrane. Its function is as follows. Produces ATP from ADP in the presence of a proton gradient across the membrane. The gamma chain is believed to be important in regulating ATPase activity and the flow of protons through the CF(0) complex. This Arthrobacter sp. (strain FB24) protein is ATP synthase gamma chain.